The primary structure comprises 70 residues: Cold shock-like protein CspB (70 aa).

Residues 7–67 enclose the CSD domain; it reads GLVKWFDAGK…GQKGPSAVNV (61 aa).

The protein localises to the cytoplasm. The chain is Cold shock-like protein CspB (cspB) from Yersinia enterocolitica.